Here is a 922-residue protein sequence, read N- to C-terminus: Alpha-actinin, sarcomeric (922 aa).

The segment at 1-252 (MMENGGYVGQ…IMTYVSCYYH (252 aa)) is actin-binding. Calponin-homology (CH) domains are found at residues 36 to 140 (KQQK…LRFA) and 149 to 255 (MTAK…HAFQ). 4 Spectrin repeats span residues 253–393 (AFQG…MVSD), 394–508 (ITNS…RCQR), 509–629 (ICDQ…SADL), and 630–742 (ISRK…TMET). EF-hand domains are found at residues 776-811 (EQLTEFRSSFNHFDKNRTGRLAPEEFKSCLVSLGYS) and 817-852 (QGDMDFQRILAVVDPNASGYVQFDAFLDFMTRESTD). The Ca(2+) site is built by D789, N791, T793, R795, and E800.

It belongs to the alpha-actinin family. Homodimer; antiparallel.

Functionally, F-actin cross-linking protein which is thought to anchor actin to a variety of intracellular structures. This is a bundling protein. The protein is Alpha-actinin, sarcomeric (Actn) of Anopheles gambiae (African malaria mosquito).